Here is a 617-residue protein sequence, read N- to C-terminus: Guanylate cyclase soluble subunit beta-2 (617 aa).

H26 serves as a coordination point for heme. The Guanylate cyclase domain maps to T391–E519. The segment covering R577–G586 has biased composition (basic and acidic residues). Residues R577–S605 form a disordered region. Residues T588–P604 show a composition bias toward polar residues.

The protein belongs to the adenylyl cyclase class-4/guanylyl cyclase family. As to quaternary structure, heterodimer of an alpha and a beta chain. Heme serves as cofactor. Expressed in gastric signet ring cell carcinoma, but not in the normal stomach.

Its subcellular location is the cytoplasm. The enzyme catalyses GTP = 3',5'-cyclic GMP + diphosphate. Activated by nitric oxide in the presence of magnesium or manganese ions. The polypeptide is Guanylate cyclase soluble subunit beta-2 (GUCY1B2) (Homo sapiens (Human)).